A 409-amino-acid chain; its full sequence is MKLKQRVVVLCAVLFLLGLAKVFLLDGGEGSAASRRDLRAFRKMEASLSLAKGARLTHTLQSPWEVAAQWVGPREVYPDETPELAAVLNALATAHVERADVGYKGTQLKALLVLDGGQKVVFKPKRYVRDYVVEGEPYAGYDRHNAEIAAFHLDRILGFRRAPLVVGRFMNLRTEIKPVATDQLLSTFLMHGNNTCFYGKCYYCRETEPACAEGDVMEGSVTLWLPDVWPLQKHRHPWGRTYREGKLARWEYDESYCEAVKKMPPYDAGPRLLDVIDTSIFDYLIGNADRHHYESFQDDGGASMLILLDNAKSFGNPSLDERSILAPLYQCCMVRVSTWNRLNLLKGGVLSSAMRQATAHDPAFPVLTGAHLTALDRRLNGVLATVRQCMETQGSENTLIEDRMNLPHP.

The Cytoplasmic portion of the chain corresponds to 1–6; the sequence is MKLKQR. The helical; Signal-anchor for type II membrane protein transmembrane segment at 7 to 25 threads the bilayer; sequence VVVLCAVLFLLGLAKVFLL. Topologically, residues 26 to 409 are lumenal; it reads DGGEGSAASR…IEDRMNLPHP (384 aa). Residues Gln-107 and Lys-123 each coordinate ATP. Position 142 (Asp-142) interacts with Mn(2+). Asn-193 carries an N-linked (GlcNAc...) asparagine glycan. Intrachain disulfides connect Cys-196-Cys-211 and Cys-201-Cys-204. 222 to 225 provides a ligand contact to ATP; it reads TLWL. 2 cysteine pairs are disulfide-bonded: Cys-257–Cys-331 and Cys-332–Cys-389. Asp-289 is a catalytic residue. Residues Glu-294 and Asp-309 each contribute to the ATP site. A Mn(2+)-binding site is contributed by Asp-309.

Belongs to the FAM20 family. Requires Mn(2+) as cofactor.

It localises to the golgi apparatus membrane. It catalyses the reaction 3-O-(beta-D-galactosyl-(1-&gt;3)-beta-D-galactosyl-(1-&gt;4)-beta-D-xylosyl)-L-seryl-[protein] + ATP = 3-O-(beta-D-galactosyl-(1-&gt;3)-beta-D-galactosyl-(1-&gt;4)-beta-D-2-O-phosphoxylosyl)-L-seryl-[protein] + ADP + H(+). In terms of biological role, responsible for the 2-O-phosphorylation of xylose in the glycosaminoglycan-protein linkage region of proteoglycans thereby regulating the amount of mature GAG chains. Sulfated glycosaminoglycans (GAGs), including heparan sulfate and chondroitin sulfate, are synthesized on the so-called common GAG-protein linkage region (GlcUAbeta1-3Galbeta1-3Galbeta1-4Xylbeta1-O-Ser) of core proteins, which is formed by the stepwise addition of monosaccharide residues by the respective specific glycosyltransferases. This Danio rerio (Zebrafish) protein is Glycosaminoglycan xylosylkinase.